We begin with the raw amino-acid sequence, 216 residues long: MSCLPALDKFLQNYHQAYLTSLGELPRYYPQGEPSVCIQGEFHADLDQAVSWQPVKREVEGSFANVEHALELTLWPEINHFYGQYFSAPLLFDSEWGTGELLQVWNEDDFTCLQQNLIGHLMMKKKLKQPPTWFIGLLDEGDKMLTINNSDGSVWIELPGEIPTQQLSPSLAEFIGALSPRIAPPVKHEELPMPALEHPGIFASFKRMWQNLFGKR.

It belongs to the Syd family.

It localises to the cell inner membrane. In terms of biological role, interacts with the SecY protein in vivo. May bind preferentially to an uncomplexed state of SecY, thus functioning either as a chelating agent for excess SecY in the cell or as a regulatory factor that negatively controls the translocase function. In Shewanella baltica (strain OS155 / ATCC BAA-1091), this protein is Protein Syd.